Consider the following 333-residue polypeptide: Ketol-acid reductoisomerase (NADP(+)) (333 aa).

A KARI N-terminal Rossmann domain is found at 6–186 (TRVYTECDAD…GALRAGAIQT (181 aa)). NADP(+) is bound by residues 29–32 (YGSQ), Lys52, Ser55, Ser57, and 87–90 (DPAQ). His112 is a catalytic residue. Gly138 contributes to the NADP(+) binding site. Positions 187–332 (TFTEETETDL…ARLRALFSWS (146 aa)) constitute a KARI C-terminal knotted domain. Mg(2+) contacts are provided by Asp195, Glu199, Glu231, and Glu235. Position 256 (Ser256) interacts with substrate.

Belongs to the ketol-acid reductoisomerase family. The cofactor is Mg(2+).

It catalyses the reaction (2R)-2,3-dihydroxy-3-methylbutanoate + NADP(+) = (2S)-2-acetolactate + NADPH + H(+). The catalysed reaction is (2R,3R)-2,3-dihydroxy-3-methylpentanoate + NADP(+) = (S)-2-ethyl-2-hydroxy-3-oxobutanoate + NADPH + H(+). It functions in the pathway amino-acid biosynthesis; L-isoleucine biosynthesis; L-isoleucine from 2-oxobutanoate: step 2/4. Its pathway is amino-acid biosynthesis; L-valine biosynthesis; L-valine from pyruvate: step 2/4. Its function is as follows. Involved in the biosynthesis of branched-chain amino acids (BCAA). Catalyzes an alkyl-migration followed by a ketol-acid reduction of (S)-2-acetolactate (S2AL) to yield (R)-2,3-dihydroxy-isovalerate. In the isomerase reaction, S2AL is rearranged via a Mg-dependent methyl migration to produce 3-hydroxy-3-methyl-2-ketobutyrate (HMKB). In the reductase reaction, this 2-ketoacid undergoes a metal-dependent reduction by NADPH to yield (R)-2,3-dihydroxy-isovalerate. The sequence is that of Ketol-acid reductoisomerase (NADP(+)) from Tropheryma whipplei (strain TW08/27) (Whipple's bacillus).